Reading from the N-terminus, the 157-residue chain is SsrA-binding protein (157 aa).

The segment at 135-157 (KRDTIKDREGKREVERAMKTNHR) is disordered.

The protein belongs to the SmpB family.

The protein resides in the cytoplasm. Its function is as follows. Required for rescue of stalled ribosomes mediated by trans-translation. Binds to transfer-messenger RNA (tmRNA), required for stable association of tmRNA with ribosomes. tmRNA and SmpB together mimic tRNA shape, replacing the anticodon stem-loop with SmpB. tmRNA is encoded by the ssrA gene; the 2 termini fold to resemble tRNA(Ala) and it encodes a 'tag peptide', a short internal open reading frame. During trans-translation Ala-aminoacylated tmRNA acts like a tRNA, entering the A-site of stalled ribosomes, displacing the stalled mRNA. The ribosome then switches to translate the ORF on the tmRNA; the nascent peptide is terminated with the 'tag peptide' encoded by the tmRNA and targeted for degradation. The ribosome is freed to recommence translation, which seems to be the essential function of trans-translation. This is SsrA-binding protein from Albidiferax ferrireducens (strain ATCC BAA-621 / DSM 15236 / T118) (Rhodoferax ferrireducens).